We begin with the raw amino-acid sequence, 251 residues long: Phosphate import ATP-binding protein PstB 2 (251 aa).

An ABC transporter domain is found at Ile-5–Leu-246. Gly-37 to Ser-44 is a binding site for ATP.

It belongs to the ABC transporter superfamily. Phosphate importer (TC 3.A.1.7) family. The complex is composed of two ATP-binding proteins (PstB), two transmembrane proteins (PstC and PstA) and a solute-binding protein (PstS).

The protein localises to the cell membrane. It catalyses the reaction phosphate(out) + ATP + H2O = ADP + 2 phosphate(in) + H(+). In terms of biological role, part of the ABC transporter complex PstSACB involved in phosphate import. Responsible for energy coupling to the transport system. This chain is Phosphate import ATP-binding protein PstB 2, found in Ligilactobacillus salivarius (strain UCC118) (Lactobacillus salivarius).